Reading from the N-terminus, the 400-residue chain is Phosphoglycerate kinase (400 aa).

Substrate-binding positions include 22-24 (DFN), arginine 38, 61-64 (HLGR), arginine 120, and arginine 153. ATP contacts are provided by residues lysine 206, glycine 297, glutamate 328, and 354–357 (GGDT).

This sequence belongs to the phosphoglycerate kinase family. Monomer.

The protein resides in the cytoplasm. The catalysed reaction is (2R)-3-phosphoglycerate + ATP = (2R)-3-phospho-glyceroyl phosphate + ADP. It functions in the pathway carbohydrate degradation; glycolysis; pyruvate from D-glyceraldehyde 3-phosphate: step 2/5. This Campylobacter curvus (strain 525.92) protein is Phosphoglycerate kinase.